The sequence spans 150 residues: MTASEIDIRKILKLLPHRYPILLVDRVLEFEPQKRIKTLKNVTINEPYFMGHFPDQPVMPGVMILEALAQSAGLLTFGADMERKEGALYYFVGIDGARFKRVVYPGDQLHLNVTVERYIRGIWKFKASATVDGEVACEAELMCTVKQAEG.

His52 is a catalytic residue.

Belongs to the thioester dehydratase family. FabZ subfamily.

The protein resides in the cytoplasm. It catalyses the reaction a (3R)-hydroxyacyl-[ACP] = a (2E)-enoyl-[ACP] + H2O. Functionally, involved in unsaturated fatty acids biosynthesis. Catalyzes the dehydration of short chain beta-hydroxyacyl-ACPs and long chain saturated and unsaturated beta-hydroxyacyl-ACPs. This chain is 3-hydroxyacyl-[acyl-carrier-protein] dehydratase FabZ, found in Cupriavidus metallidurans (strain ATCC 43123 / DSM 2839 / NBRC 102507 / CH34) (Ralstonia metallidurans).